The sequence spans 153 residues: NAD(P)H-quinone oxidoreductase subunit N (153 aa).

This sequence belongs to the complex I NdhN subunit family. In terms of assembly, NDH-1 can be composed of about 15 different subunits; different subcomplexes with different compositions have been identified which probably have different functions.

It localises to the cellular thylakoid membrane. It catalyses the reaction a plastoquinone + NADH + (n+1) H(+)(in) = a plastoquinol + NAD(+) + n H(+)(out). The enzyme catalyses a plastoquinone + NADPH + (n+1) H(+)(in) = a plastoquinol + NADP(+) + n H(+)(out). Its function is as follows. NDH-1 shuttles electrons from an unknown electron donor, via FMN and iron-sulfur (Fe-S) centers, to quinones in the respiratory and/or the photosynthetic chain. The immediate electron acceptor for the enzyme in this species is believed to be plastoquinone. Couples the redox reaction to proton translocation, and thus conserves the redox energy in a proton gradient. Cyanobacterial NDH-1 also plays a role in inorganic carbon-concentration. This chain is NAD(P)H-quinone oxidoreductase subunit N, found in Parasynechococcus marenigrum (strain WH8102).